Here is a 303-residue protein sequence, read N- to C-terminus: Ribosomal RNA small subunit methyltransferase A (303 aa).

Positions 37, 39, 64, 85, 115, and 138 each coordinate S-adenosyl-L-methionine.

Belongs to the class I-like SAM-binding methyltransferase superfamily. rRNA adenine N(6)-methyltransferase family. RsmA subfamily.

The protein resides in the cytoplasm. The catalysed reaction is adenosine(1518)/adenosine(1519) in 16S rRNA + 4 S-adenosyl-L-methionine = N(6)-dimethyladenosine(1518)/N(6)-dimethyladenosine(1519) in 16S rRNA + 4 S-adenosyl-L-homocysteine + 4 H(+). In terms of biological role, specifically dimethylates two adjacent adenosines (A1518 and A1519) in the loop of a conserved hairpin near the 3'-end of 16S rRNA in the 30S particle. May play a critical role in biogenesis of 30S subunits. The protein is Ribosomal RNA small subunit methyltransferase A of Bifidobacterium adolescentis (strain ATCC 15703 / DSM 20083 / NCTC 11814 / E194a).